The sequence spans 100 residues: Pancreatic polypeptide prohormone (100 aa).

The signal sequence occupies residues 1-29 (MAVAYCCLSLFLVSTWVALLLQPLQGTWG). Y65 carries the tyrosine amide modification.

It belongs to the NPY family. In terms of processing, no icosapeptide-like peptide is cleaved from the C-terminal.

It is found in the secreted. Functionally, hormone secreted by pancreatic cells that acts as a regulator of pancreatic and gastrointestinal functions probably by signaling through the G protein-coupled receptor NPY4R2. The chain is Pancreatic polypeptide prohormone (Ppy) from Mus musculus (Mouse).